Reading from the N-terminus, the 387-residue chain is Chaperone protein DnaJ (387 aa).

The region spanning 6–70 is the J domain; the sequence is DYYEILGLSR…EKRAQYDRFG (65 aa). Residues 130 to 212 form a CR-type zinc finger; the sequence is GVRKDIDVPR…CSGTGRVRNT (83 aa). Zn(2+)-binding residues include Cys143, Cys146, Cys160, Cys163, Cys186, Cys189, Cys200, and Cys203. 4 CXXCXGXG motif repeats span residues 143–150, 160–167, 186–193, and 200–207; these read CSNCSGTG, CPTCGGTG, CSTCRGKG, and CPVCSGTG. A disordered region spans residues 143-162; the sequence is CSNCSGTGARPGTSPKRCPT.

This sequence belongs to the DnaJ family. Homodimer. Zn(2+) serves as cofactor.

Its subcellular location is the cytoplasm. In terms of biological role, participates actively in the response to hyperosmotic and heat shock by preventing the aggregation of stress-denatured proteins and by disaggregating proteins, also in an autonomous, DnaK-independent fashion. Unfolded proteins bind initially to DnaJ; upon interaction with the DnaJ-bound protein, DnaK hydrolyzes its bound ATP, resulting in the formation of a stable complex. GrpE releases ADP from DnaK; ATP binding to DnaK triggers the release of the substrate protein, thus completing the reaction cycle. Several rounds of ATP-dependent interactions between DnaJ, DnaK and GrpE are required for fully efficient folding. Also involved, together with DnaK and GrpE, in the DNA replication of plasmids through activation of initiation proteins. The polypeptide is Chaperone protein DnaJ (Methanosarcina thermophila).